A 68-amino-acid polypeptide reads, in one-letter code: Protein SlyX homolog (68 aa).

It belongs to the SlyX family.

This Brucella anthropi (strain ATCC 49188 / DSM 6882 / CCUG 24695 / JCM 21032 / LMG 3331 / NBRC 15819 / NCTC 12168 / Alc 37) (Ochrobactrum anthropi) protein is Protein SlyX homolog.